The chain runs to 668 residues: Lebercilin-like protein (668 aa).

Positions Ser17–Ala44 are disordered. Basic and acidic residues predominate over residues Asn22–Arg31. Coiled-coil stretches lie at residues Leu148–Glu259 and Ala305–Ile336. Positions Tyr351 to Ser402 are disordered. Positions Pro368 to Ser380 are enriched in polar residues. The stretch at Glu420–Val440 forms a coiled coil. Disordered regions lie at residues Arg495 to Gln520, Leu533 to Ser581, and Ser605 to Ile668. Positions Ala546 to His558 are enriched in polar residues. Composition is skewed to basic and acidic residues over residues Ser560 to Ser572 and Gly621 to His632. Residues Pro633–Thr660 are compositionally biased toward polar residues.

It belongs to the LCA5 family.

This chain is Lebercilin-like protein, found in Macaca fascicularis (Crab-eating macaque).